The primary structure comprises 490 residues: Betaine aldehyde dehydrogenase (490 aa).

Positions 26, 27, and 93 each coordinate K(+). 150 to 152 (GAW) provides a ligand contact to NAD(+). K162 acts as the Charge relay system in catalysis. 176-179 (KPSE) contributes to the NAD(+) binding site. V180 lines the K(+) pocket. An NAD(+)-binding site is contributed by 230–233 (GVAS). L246 provides a ligand contact to K(+). Residue E252 is the Proton acceptor of the active site. NAD(+)-binding residues include G254, C286, and E387. Residue C286 is the Nucleophile of the active site. C286 is subject to Cysteine sulfenic acid (-SOH). Residues K457 and G460 each coordinate K(+). E464 (charge relay system) is an active-site residue.

It belongs to the aldehyde dehydrogenase family. As to quaternary structure, dimer of dimers. K(+) is required as a cofactor.

The enzyme catalyses betaine aldehyde + NAD(+) + H2O = glycine betaine + NADH + 2 H(+). It participates in amine and polyamine biosynthesis; betaine biosynthesis via choline pathway; betaine from betaine aldehyde: step 1/1. In terms of biological role, involved in the biosynthesis of the osmoprotectant glycine betaine. Catalyzes the irreversible oxidation of betaine aldehyde to the corresponding acid. This Escherichia coli O7:K1 (strain IAI39 / ExPEC) protein is Betaine aldehyde dehydrogenase.